We begin with the raw amino-acid sequence, 270 residues long: Aliphatic sulfonates import ATP-binding protein SsuB 1 (270 aa).

One can recognise an ABC transporter domain in the interval 18–232; sequence VQLRNVVRQF…DSGQAGFQLI (215 aa). Residue 50 to 57 coordinates ATP; it reads GASGSGKT. The disordered stretch occupies residues 247 to 270; it reads PDTAPQASAPDSTFSELRRVASAR. Residues 251-261 show a composition bias toward polar residues; it reads PQASAPDSTFS.

This sequence belongs to the ABC transporter superfamily. Aliphatic sulfonates importer (TC 3.A.1.17.2) family. In terms of assembly, the complex is composed of two ATP-binding proteins (SsuB), two transmembrane proteins (SsuC) and a solute-binding protein (SsuA).

Its subcellular location is the cell inner membrane. It catalyses the reaction ATP + H2O + aliphatic sulfonate-[sulfonate-binding protein]Side 1 = ADP + phosphate + aliphatic sulfonateSide 2 + [sulfonate-binding protein]Side 1.. In terms of biological role, part of the ABC transporter complex SsuABC involved in aliphatic sulfonates import. Responsible for energy coupling to the transport system. This Pseudomonas syringae pv. tomato (strain ATCC BAA-871 / DC3000) protein is Aliphatic sulfonates import ATP-binding protein SsuB 1.